We begin with the raw amino-acid sequence, 65 residues long: Large ribosomal subunit protein bL35 (65 aa).

This sequence belongs to the bacterial ribosomal protein bL35 family.

This chain is Large ribosomal subunit protein bL35, found in Thermotoga neapolitana (strain ATCC 49049 / DSM 4359 / NBRC 107923 / NS-E).